Consider the following 358-residue polypeptide: Nitric oxide synthase oxygenase (358 aa).

C62 provides a ligand contact to heme.

This sequence belongs to the NOS family. Bacterial NOS oxygenase subfamily. In terms of assembly, homodimer. The cofactor is heme. Requires (6S)-5,6,7,8-tetrahydrofolate as cofactor.

It catalyses the reaction 3 reduced [flavodoxin] + 2 L-arginine + 4 O2 = 3 oxidized [flavodoxin] + 2 L-citrulline + 2 nitric oxide + 4 H2O + 5 H(+). Functionally, catalyzes the production of nitric oxide. This chain is Nitric oxide synthase oxygenase (nos), found in Staphylococcus aureus (strain COL).